A 311-amino-acid polypeptide reads, in one-letter code: Methionyl-tRNA formyltransferase (311 aa).

The disordered stretch occupies residues 33–52 (RPDRPAGRGRHQRSSPVREL). Residue 110–113 (SLLP) participates in (6S)-5,6,7,8-tetrahydrofolate binding.

Belongs to the Fmt family.

It catalyses the reaction L-methionyl-tRNA(fMet) + (6R)-10-formyltetrahydrofolate = N-formyl-L-methionyl-tRNA(fMet) + (6S)-5,6,7,8-tetrahydrofolate + H(+). Functionally, attaches a formyl group to the free amino group of methionyl-tRNA(fMet). The formyl group appears to play a dual role in the initiator identity of N-formylmethionyl-tRNA by promoting its recognition by IF2 and preventing the misappropriation of this tRNA by the elongation apparatus. This Parafrankia sp. (strain EAN1pec) protein is Methionyl-tRNA formyltransferase.